The primary structure comprises 199 residues: Pneumococcal vaccine antigen A homolog (199 aa).

Its subcellular location is the cell surface. This chain is Pneumococcal vaccine antigen A homolog (pvaA), found in Streptococcus pyogenes serotype M6 (strain ATCC BAA-946 / MGAS10394).